A 236-amino-acid polypeptide reads, in one-letter code: tRNA (guanine-N(1)-)-methyltransferase (236 aa).

S-adenosyl-L-methionine is bound by residues G114 and 134 to 139 (IGDYIL).

This sequence belongs to the RNA methyltransferase TrmD family. In terms of assembly, homodimer.

Its subcellular location is the cytoplasm. The catalysed reaction is guanosine(37) in tRNA + S-adenosyl-L-methionine = N(1)-methylguanosine(37) in tRNA + S-adenosyl-L-homocysteine + H(+). Its function is as follows. Specifically methylates guanosine-37 in various tRNAs. In Wolbachia pipientis wMel, this protein is tRNA (guanine-N(1)-)-methyltransferase.